A 134-amino-acid chain; its full sequence is S-adenosylmethionine decarboxylase proenzyme (134 aa).

Catalysis depends on Ser64, which acts as the Schiff-base intermediate with substrate; via pyruvic acid. Ser64 carries the pyruvic acid (Ser); by autocatalysis modification. The Proton acceptor; for processing activity role is filled by His69. Cys84 serves as the catalytic Proton donor; for catalytic activity.

This sequence belongs to the prokaryotic AdoMetDC family. Type 1 subfamily. Heterotetramer of two alpha and two beta chains arranged as a dimer of alpha/beta heterodimers. It depends on pyruvate as a cofactor. In terms of processing, is synthesized initially as an inactive proenzyme. Formation of the active enzyme involves a self-maturation process in which the active site pyruvoyl group is generated from an internal serine residue via an autocatalytic post-translational modification. Two non-identical subunits are generated from the proenzyme in this reaction, and the pyruvate is formed at the N-terminus of the alpha chain, which is derived from the carboxyl end of the proenzyme. The post-translation cleavage follows an unusual pathway, termed non-hydrolytic serinolysis, in which the side chain hydroxyl group of the serine supplies its oxygen atom to form the C-terminus of the beta chain, while the remainder of the serine residue undergoes an oxidative deamination to produce ammonia and the pyruvoyl group blocking the N-terminus of the alpha chain.

It carries out the reaction S-adenosyl-L-methionine + H(+) = S-adenosyl 3-(methylsulfanyl)propylamine + CO2. It participates in amine and polyamine biosynthesis; S-adenosylmethioninamine biosynthesis; S-adenosylmethioninamine from S-adenosyl-L-methionine: step 1/1. Catalyzes the decarboxylation of S-adenosylmethionine to S-adenosylmethioninamine (dcAdoMet), the propylamine donor required for the synthesis of the polyamines spermine and spermidine from the diamine putrescine. This is S-adenosylmethionine decarboxylase proenzyme from Hydrogenobaculum sp. (strain Y04AAS1).